The primary structure comprises 278 residues: Digeranylgeranylglyceryl phosphate synthase (278 aa).

8 helical membrane passes run 15 to 35, 36 to 56, 89 to 109, 133 to 153, 159 to 179, 203 to 223, 225 to 245, and 258 to 278; these read VIGS…WKIV, PIKL…GYII, IVLF…AFII, LIVA…FFEG, TLIP…VKGI, WFIS…PYFF, FNII…LVVL, and AYMK…TLPI.

This sequence belongs to the UbiA prenyltransferase family. DGGGP synthase subfamily. Requires Mg(2+) as cofactor.

The protein resides in the cell membrane. The catalysed reaction is sn-3-O-(geranylgeranyl)glycerol 1-phosphate + (2E,6E,10E)-geranylgeranyl diphosphate = 2,3-bis-O-(geranylgeranyl)-sn-glycerol 1-phosphate + diphosphate. The protein operates within membrane lipid metabolism; glycerophospholipid metabolism. Its function is as follows. Prenyltransferase that catalyzes the transfer of the geranylgeranyl moiety of geranylgeranyl diphosphate (GGPP) to the C2 hydroxyl of (S)-3-O-geranylgeranylglyceryl phosphate (GGGP). This reaction is the second ether-bond-formation step in the biosynthesis of archaeal membrane lipids. This Sulfurisphaera tokodaii (strain DSM 16993 / JCM 10545 / NBRC 100140 / 7) (Sulfolobus tokodaii) protein is Digeranylgeranylglyceryl phosphate synthase.